A 435-amino-acid chain; its full sequence is GTPase Der (435 aa).

EngA-type G domains are found at residues 4-167 (PVVA…GDKA) and 175-350 (IRFS…ENQT). Residues 10 to 17 (GRPNVGKS), 57 to 61 (DTGGI), 119 to 122 (NKAD), 181 to 188 (GRPNVGKS), 228 to 232 (DTAGI), and 293 to 296 (NKWD) each bind GTP. Residues 351–435 (RRIQSSVLND…PIKILARKRK (85 aa)) form the KH-like domain.

The protein belongs to the TRAFAC class TrmE-Era-EngA-EngB-Septin-like GTPase superfamily. EngA (Der) GTPase family. As to quaternary structure, associates with the 50S ribosomal subunit.

In terms of biological role, GTPase that plays an essential role in the late steps of ribosome biogenesis. The polypeptide is GTPase Der (Lactobacillus johnsonii (strain CNCM I-12250 / La1 / NCC 533)).